Consider the following 162-residue polypeptide: Novel acetylcholine receptor chaperone (162 aa).

The Cytoplasmic segment spans residues Met1 to Arg5. A helical transmembrane segment spans residues Thr6 to Ile26. Residues Lys27 to Ser61 are Lumenal-facing. The chain crosses the membrane as a helical span at residues Val62–Val82. The Cytoplasmic portion of the chain corresponds to Pro83–Asp88. The helical transmembrane segment at Val89 to Gly109 threads the bilayer. Over Asp110 to Arg114 the chain is Lumenal. A helical membrane pass occupies residues Tyr115–Val131. Residues Ser132–Ser162 lie on the Cytoplasmic side of the membrane. A disordered region spans residues Glu141–Ser162. Basic and acidic residues predominate over residues His152–Ser162.

Belongs to the DoxX family.

Its subcellular location is the peroxisome membrane. It is found in the cytoplasmic vesicle. It localises to the endoplasmic reticulum membrane. Molecular chaperone which mediates the proper assembly and functional expression of the nicotinic acetylcholine receptors (nAChRs) throughout the brain. Essential for the proper folding, assembly, function and surface trafficking of alpha-7 (CHRNA7), alpha-4-beta-2, alpha-3-beta-2 and alpha-3-beta-4 receptors. This chain is Novel acetylcholine receptor chaperone (tmem35a), found in Xenopus tropicalis (Western clawed frog).